A 119-amino-acid polypeptide reads, in one-letter code: Large ribosomal subunit protein bL20 (119 aa).

This sequence belongs to the bacterial ribosomal protein bL20 family.

Its function is as follows. Binds directly to 23S ribosomal RNA and is necessary for the in vitro assembly process of the 50S ribosomal subunit. It is not involved in the protein synthesizing functions of that subunit. The chain is Large ribosomal subunit protein bL20 from Xylella fastidiosa (strain M12).